A 294-amino-acid polypeptide reads, in one-letter code: Phosphatidylinositol transfer protein SFH5 (294 aa).

The region spanning 100–266 is the CRAL-TRIO domain; that stretch reads HNTELQNVGI…GYGGKDKKNN (167 aa). Tyr-128, Arg-148, His-173, Tyr-175, and Lys-209 together coordinate heme.

The protein belongs to the SFH5 family. The cofactor is heme b.

The protein localises to the cytoplasm. Its subcellular location is the endoplasmic reticulum membrane. It is found in the microsome membrane. The catalysed reaction is a 1,2-diacyl-sn-glycero-3-phospho-(1D-myo-inositol)(in) = a 1,2-diacyl-sn-glycero-3-phospho-(1D-myo-inositol)(out). In terms of biological role, non-classical phosphatidylinositol (PtdIns) transfer protein (PITP), which exhibits PtdIns-binding/transfer activity in the absence of detectable PtdCho-binding/transfer activity. Regulates PtdIns(4,5)P2 homeostasis at the plasma membrane. Heme-binding protein that may play a role in organic oxidant-induced stress responses. This is Phosphatidylinositol transfer protein SFH5 (SFH5) from Saccharomyces cerevisiae (strain YJM789) (Baker's yeast).